Consider the following 173-residue polypeptide: NADH-ubiquinone oxidoreductase chain 6 (173 aa).

5 consecutive transmembrane segments (helical) span residues 1 to 21 (MTYFVLFLSLCFVLGGLAVAS), 27 to 47 (YGVVGLVLASVVGCGWLLSLG), 48 to 68 (VSFVSLVLFMVYLGGMLVVFV), 91 to 111 (GVSFVGVLVMGLVIGGFIGCL), and 139 to 159 (CGVGMFLVAGWGLLLTLFVVL).

The protein belongs to the complex I subunit 6 family.

The protein resides in the mitochondrion membrane. The catalysed reaction is a ubiquinone + NADH + 5 H(+)(in) = a ubiquinol + NAD(+) + 4 H(+)(out). Functionally, core subunit of the mitochondrial membrane respiratory chain NADH dehydrogenase (Complex I) that is believed to belong to the minimal assembly required for catalysis. Complex I functions in the transfer of electrons from NADH to the respiratory chain. The immediate electron acceptor for the enzyme is believed to be ubiquinone. In Fratercula cirrhata (Tufted puffin), this protein is NADH-ubiquinone oxidoreductase chain 6 (MT-ND6).